The following is a 94-amino-acid chain: Large ribosomal subunit protein bL28 (94 aa).

Belongs to the bacterial ribosomal protein bL28 family.

The protein is Large ribosomal subunit protein bL28 of Maricaulis maris (strain MCS10) (Caulobacter maris).